Consider the following 100-residue polypeptide: Urease subunit gamma 1 (100 aa).

Belongs to the urease gamma subunit family. As to quaternary structure, heterotrimer of UreA (gamma), UreB (beta) and UreC (alpha) subunits. Three heterotrimers associate to form the active enzyme.

The protein localises to the cytoplasm. It catalyses the reaction urea + 2 H2O + H(+) = hydrogencarbonate + 2 NH4(+). It participates in nitrogen metabolism; urea degradation; CO(2) and NH(3) from urea (urease route): step 1/1. Functionally, disruption of the ure1 gene cluster suggests that it protects brucellae during their passage through the stomach. The major route of infection in human brucellosis is oral. The sequence is that of Urease subunit gamma 1 from Brucella abortus (strain 2308).